Reading from the N-terminus, the 600-residue chain is L-galactono-1,4-lactone dehydrogenase, mitochondrial (600 aa).

Residues 1–25 (MLRSLLLRRSNARSLRPPFPPLRTL) constitute a mitochondrion transit peptide. The interval 16-51 (RPPFPPLRTLCTSGQTLTPAPPPPPPPPPPISSSAS) is disordered. The propeptide at 26-91 (CTSGQTLTPA…AKHKKAQIFR (66 aa)) is removed in mature form. A compositionally biased stretch (pro residues) spans 34-46 (PAPPPPPPPPPPI). The chain crosses the membrane as a helical span at residues 58–74 (YAGYAALALFSGAATYF). The FAD-binding PCMH-type domain occupies 108–279 (THEVQTRNFN…AEVTLQCVER (172 aa)).

FAD is required as a cofactor.

It is found in the mitochondrion membrane. It carries out the reaction L-galactono-1,4-lactone + 4 Fe(III)-[cytochrome c] = L-dehydroascorbate + 4 Fe(II)-[cytochrome c] + 5 H(+). It participates in cofactor biosynthesis; L-ascorbate biosynthesis. Inhibited by sulfhydryl-modifying agents such as N-ethylmaleimide, monoiodoacetic acid and p-hydroxymercuribenzoic acid. No inhibition by riboflavin and lycorine. Its function is as follows. Involved in the biosynthesis of ascorbic acid. Uses L-galactono-1,4-lactone as substrate, but not L-gulono-1,4-lactone, D-galactono-1,4-lactone, D-gulono-1,4-lactone, D-erythronic-1,4-lactone, D-xylonic-1,4-lactone, L-mannono-1,4-lactone, D-galactonic acid, D-glucuronic acid or D-gluconic acid. FAD, NAD, NADP and O(2) cannot act as electron acceptor. The polypeptide is L-galactono-1,4-lactone dehydrogenase, mitochondrial (Brassica oleracea (Wild cabbage)).